Here is a 201-residue protein sequence, read N- to C-terminus: Cytochrome c oxidase subunit 3 (201 aa).

The next 4 helical transmembrane spans lie at 25–45 (VLGLLVFLISESLMFGGLFAA), 65–85 (LFVPTINTLILISSSFVIHYG), 100–120 (WYWITAAMGAVFLGGQVYEYL), and 137–157 (VMTGFHGLHVFIGILLILGVI).

It belongs to the cytochrome c oxidase subunit 3 family.

The protein resides in the cell membrane. It carries out the reaction 4 Fe(II)-[cytochrome c] + O2 + 8 H(+)(in) = 4 Fe(III)-[cytochrome c] + 2 H2O + 4 H(+)(out). The chain is Cytochrome c oxidase subunit 3 (ctaE) from Thermostichus vulcanus (Synechococcus vulcanus).